The primary structure comprises 406 residues: MSPSDVPINWKRNLTVAWLGCFLTGAAFSLVMPFLPLYVEQLGVTGHSALNMWSGLVFSITFLFSAIASPFWGGLADRKGRKIMLLRSALGMAIVMLLMGLAQNIWQFLLLRALLGLLGGFVPNANALIATQVPRNKSGWALGTLSTGGVSGALLGPLAGGLLADQYGLRPVFFITASVLLVCFLLTLFFTRERFQPVSKKEMLHVREVVGSLKNPKLVLSLFVTTLIIQVATGSIAPILTLYVRELAGNVSNIAFISGMIASVPGVAALLSAPRLGKLGDRIGPEKILITALIISVLLLIPMSFVQTPWQLGVLRFLLGAADGALLPAVQTLLVYNASNQIAGRIFSYNQSFRDIGNVTGPLMGAAISASYGFRAVFCVTAGVVLFNAIYSWNSLRRRRETLAAK.

Transmembrane regions (helical) follow at residues 16-36 (VAWLGCFLTGAAFSLVMPFLP), 56-76 (LVFSITFLFSAIASPFWGGLA), 90-110 (LGMAIVMLLMGLAQNIWQFLL), 113-133 (ALLGLLGGFVPNANALIATQV), 144-164 (TLSTGGVSGALLGPLAGGLLA), 171-191 (PVFFITASVLLVCFLLTLFFT), 222-242 (LFVTTLIIQVATGSIAPILTL), 254-274 (IAFISGMIASVPGVAALLSAP), 288-308 (ILITALIISVLLLIPMSFVQT), 317-337 (FLLGAADGALLPAVQTLLVYN), and 376-396 (AVFCVTAGVVLFNAIYSWNSL).

Belongs to the major facilitator superfamily. DHA1 family. MdtG (TC 2.A.1.2.20) subfamily.

It is found in the cell inner membrane. This Citrobacter koseri (strain ATCC BAA-895 / CDC 4225-83 / SGSC4696) protein is Multidrug resistance protein MdtG.